Reading from the N-terminus, the 1220-residue chain is DNA polymerase catalytic subunit (1220 aa).

2 disordered regions span residues 21–43 (GKRP…RPPQ) and 641–691 (QADA…KPGV). Residues 646-660 (SETSELAMDSQSHAF) show a composition bias toward polar residues.

The protein belongs to the DNA polymerase type-B family. Forms a complex with the ssDNA-binding protein, the DNA polymerase processivity factor, and the alkaline exonuclease. Interacts with the helicase-primase complex composed of the primase, the helicase and the primase-associated factor; this interaction may coordinate leading and lagging strand DNA synthesis at the replication fork.

The protein localises to the host nucleus. The catalysed reaction is DNA(n) + a 2'-deoxyribonucleoside 5'-triphosphate = DNA(n+1) + diphosphate. It carries out the reaction Endonucleolytic cleavage to 5'-phosphomonoester.. Replicates viral genomic DNA. The replication complex is composed of six viral proteins: the DNA polymerase, processivity factor, primase, primase-associated factor, helicase, and ssDNA-binding protein. Additionally, the polymerase contains an intrinsic ribonuclease H (RNase H) activity that specifically degrades RNA/DNA heteroduplexes or duplex DNA substrates in the 5' to 3' direction. Therefore, it can catalyze the excision of the RNA primers that initiate the synthesis of Okazaki fragments at a replication fork during viral DNA replication. This chain is DNA polymerase catalytic subunit, found in Equus caballus (Horse).